A 392-amino-acid polypeptide reads, in one-letter code: Methylthioribose-1-phosphate isomerase (392 aa).

D267 (proton donor) is an active-site residue.

Belongs to the eIF-2B alpha/beta/delta subunits family. MtnA subfamily.

Its subcellular location is the cytoplasm. It is found in the nucleus. It carries out the reaction 5-(methylsulfanyl)-alpha-D-ribose 1-phosphate = 5-(methylsulfanyl)-D-ribulose 1-phosphate. The protein operates within amino-acid biosynthesis; L-methionine biosynthesis via salvage pathway; L-methionine from S-methyl-5-thio-alpha-D-ribose 1-phosphate: step 1/6. Its function is as follows. Catalyzes the interconversion of methylthioribose-1-phosphate (MTR-1-P) into methylthioribulose-1-phosphate (MTRu-1-P). In Blastomyces gilchristii (strain SLH14081) (Blastomyces dermatitidis), this protein is Methylthioribose-1-phosphate isomerase.